A 275-amino-acid chain; its full sequence is Voltage-dependent calcium channel gamma-5 subunit (275 aa).

Helical transmembrane passes span 8-28, 103-123, 129-149, and 181-201; these read ALTL…GIAV, FPLV…IGHI, ILAF…VVGL, and FAAI…YLFM.

The protein belongs to the PMP-22/EMP/MP20 family. CACNG subfamily. In terms of assembly, the L-type calcium channel is composed of five subunits: alpha-1, alpha-2/delta, beta and gamma. Acts as an auxiliary subunit for AMPA-selective glutamate receptors (AMPARs). Found in a complex with GRIA1, GRIA2, GRIA3, GRIA4, CNIH2, CNIH3, CACNG2, CACNG3, CACNG4, CACNG7 and CACNG8. Interacts with GRIA1, GRIA2, GRIA3 and GRIA4.

Its subcellular location is the membrane. The protein resides in the postsynaptic density membrane. Functionally, regulates the gating properties of AMPA-selective glutamate receptors (AMPARs). Modulates their gating properties by accelerating their rates of activation, deactivation and desensitization. Displays subunit-specific AMPA receptor regulation. Shows specificity for GRIA1, GRIA4 and the long isoform of GRIA2. According to PubMed:18817736, shows only specificity for GRIA2 and specifically to the form of GRIA2 for which a single amino acid in the pore region has been edited from a glutamine to an arginine residue. Thought to stabilize the calcium channel in an inactivated (closed) state. This Rattus norvegicus (Rat) protein is Voltage-dependent calcium channel gamma-5 subunit (Cacng5).